A 493-amino-acid polypeptide reads, in one-letter code: 2-amino-4-deoxychorismate synthase (493 aa).

Belongs to the anthranilate synthase component I family. Mg(2+) serves as cofactor.

It catalyses the reaction (2S)-2-amino-4-deoxychorismate + L-glutamate = chorismate + L-glutamine. In terms of biological role, converts chorismate to 2-amino-4-deoxychorismate (ADIC). Involved in the biosynthesis of the benzoxazolinate moiety of the enediyne antitumor antibiotic C-1027. The polypeptide is 2-amino-4-deoxychorismate synthase (sgcD) (Streptomyces globisporus).